A 401-amino-acid chain; its full sequence is Tyrosine--tRNA ligase (401 aa).

The 'HIGH' region signature appears at 42-51 (PTAPDIHLGH). The 'KMSKS' region signature appears at 226-230 (KMSKS). Position 229 (K229) interacts with ATP. Positions 334–394 (MGLATLLKEA…GKRKFARVRL (61 aa)) constitute an S4 RNA-binding domain.

It belongs to the class-I aminoacyl-tRNA synthetase family. TyrS type 2 subfamily. As to quaternary structure, homodimer.

The protein localises to the cytoplasm. The catalysed reaction is tRNA(Tyr) + L-tyrosine + ATP = L-tyrosyl-tRNA(Tyr) + AMP + diphosphate + H(+). Catalyzes the attachment of tyrosine to tRNA(Tyr) in a two-step reaction: tyrosine is first activated by ATP to form Tyr-AMP and then transferred to the acceptor end of tRNA(Tyr). The protein is Tyrosine--tRNA ligase of Haemophilus influenzae (strain ATCC 51907 / DSM 11121 / KW20 / Rd).